The primary structure comprises 585 residues: Putative indole-3-acetic acid-amido synthetase GH3.9 (585 aa).

Belongs to the IAA-amido conjugating enzyme family.

In terms of biological role, catalyzes the synthesis of indole-3-acetic acid (IAA)-amino acid conjugates, providing a mechanism for the plant to cope with the presence of excess auxin. This is Putative indole-3-acetic acid-amido synthetase GH3.9 (GH3.9) from Arabidopsis thaliana (Mouse-ear cress).